The following is an 89-amino-acid chain: Large ribosomal subunit protein bL27 (89 aa).

This sequence belongs to the bacterial ribosomal protein bL27 family.

The polypeptide is Large ribosomal subunit protein bL27 (Bacteroides fragilis (strain ATCC 25285 / DSM 2151 / CCUG 4856 / JCM 11019 / LMG 10263 / NCTC 9343 / Onslow / VPI 2553 / EN-2)).